We begin with the raw amino-acid sequence, 189 residues long: MGVTKKPDLNDPVLRAKLAKGMGHNYYGEPAWPNDLSYIFPVVILGTIACTIGLAVLEPSMIGEPANPFATPLEILPEWYLFPVFQILRTVPNQILRTVPNKLLGVLLMASVPAGSLTVPFLENVNQFQNPFRRPVATTVSLIGTAVALWLGIGAALPIDESLTLGLFQSNLIQLSNIKIFQIFFFSYI.

A run of 3 helical transmembrane segments spans residues 36–56 (LSYI…GLAV), 103–123 (LLGV…PFLE), and 139–159 (TVSL…ALPI).

The protein belongs to the cytochrome b family. PetD subfamily. In terms of assembly, the 4 large subunits of the cytochrome b6-f complex are cytochrome b6, subunit IV (17 kDa polypeptide, petD), cytochrome f and the Rieske protein, while the 4 small subunits are petG, petL, petM and petN. The complex functions as a dimer.

It is found in the plastid. Its subcellular location is the chloroplast thylakoid membrane. In terms of biological role, component of the cytochrome b6-f complex, which mediates electron transfer between photosystem II (PSII) and photosystem I (PSI), cyclic electron flow around PSI, and state transitions. This is Cytochrome b6-f complex subunit 4 from Pinus koraiensis (Korean pine).